The following is a 173-amino-acid chain: Lens fiber membrane intrinsic protein (173 aa).

The Cytoplasmic segment spans residues M1–S3. A helical membrane pass occupies residues F4–A24. The Extracellular portion of the chain corresponds to T25–A66. Residues W43 and W61 are each glycosylated (C-linked (Man) tryptophan). The N-linked (GlcNAc...) asparagine glycan is linked to N62. The chain crosses the membrane as a helical span at residues F67–A87. Over H88–P98 the chain is Cytoplasmic. Residues F99–Y119 form a helical membrane-spanning segment. Topologically, residues T120–Y140 are extracellular. A helical transmembrane segment spans residues I141–Y161. Residues R162–R173 lie on the Cytoplasmic side of the membrane. S170 bears the Phosphoserine mark. Phosphothreonine is present on T171.

Belongs to the PMP-22/EMP/MP20 family. As to quaternary structure, seems to be associated with itself or another lens membrane component via disulfide bonds. As to expression, eye lens specific.

It localises to the membrane. In terms of biological role, present in the thicker 16-17 nm junctions of mammalian lens fiber cells, where it may contribute to cell junctional organization. Acts as a receptor for calmodulin. May play an important role in both lens development and cataractogenesis. In Homo sapiens (Human), this protein is Lens fiber membrane intrinsic protein (LIM2).